Consider the following 338-residue polypeptide: CRISPR system Cmr subunit Cmr1-1 (338 aa).

Belongs to the CRISPR system Cmr1 family. Part of the type III-B Cmr ribonucleoprotein (RNP) complex, an elongated RNP with Cmr2 and Cmr3 as the base, with Cmr4 and Cmr5 forming a helical core along the mature crRNA (39 or 45 nt in length), while the complex is capped by Cmr6 and Cmr1. The 5' end of the crRNA is bound to Cmr2 and Cmr3, while Cmr6 and a Cmr1 subunit (Cmr1-1 or Cmr1-2) cap the 3' end of the crRNA. The target RNA lies antiparallel to the crRNA, with its 5' end near Cmr1 and Cmr6 and its 3' end near Cmr2 and Cmr3; major target cleavage occurs nears the junction of Cmr1/Cmr6 and Cmr4/Cmr, with minor cleavage occurring at 6 nt intervals which coincide with the proposed spacing of Cmr4 subunits.

It is found in the cytoplasm. Functionally, CRISPR (clustered regularly interspaced short palindromic repeat), is an adaptive immune system that provides protection against mobile genetic elements (viruses, transposable elements and conjugative plasmids). CRISPR clusters contain sequences complementary to antecedent mobile elements and target invading nucleic acids. CRISPR clusters are transcribed and processed into CRISPR RNA (crRNA), formerly called psiRNA (prokaryotic silencing) in this organism. Part of the Cmr ribonucleoprotein complex which has divalent cation-dependent endoribonuclease activity specific for ssRNA complementary to the crRNA (target RNA), generating 5' hydroxy- and 3' phosphate or 2'-3' cyclic phosphate termini. Cmr4 is probably the subunit that cleaves target RNA. Cmr complex does not cleave ssDNA complementary to the crRNA. Cleavage of invading RNA is guided by the crRNA; substrate cleavage occurs a fixed distance (14 nt) from the 3' end of the crRNA. In vitro reconstitution shows Cmr1-2 and Cmr5 are not absolutely necessary for target cleavage. In Pyrococcus furiosus (strain ATCC 43587 / DSM 3638 / JCM 8422 / Vc1), this protein is CRISPR system Cmr subunit Cmr1-1.